Reading from the N-terminus, the 201-residue chain is Cerebellin-4 (201 aa).

The N-terminal stretch at 1–27 (MGSGRRALSAVPAVLLVLTLPGLPVWA) is a signal peptide. Residues N29 and N88 are each glycosylated (N-linked (GlcNAc...) asparagine). Residues 66 to 201 (AANSKVAFSA…TFSGFLVFPL (136 aa)) form the C1q domain.

Homohexamer; disulfide-linked homotrimers. The trimers are assembled via the globular C1q domains. The trimers associate via N-terminal cysteine residues to form disulfide-linked hexamers. May form oligomers with CBLN1, CBLN2 and CBLN3 prior to secretion. Strongly interacts with DCC in a NTN1-displaceable fashion. Weakly binds to NRXN1 and NRXN2 long and short isoforms produced by alternative promoter usage. Interaction with NRXN3 short isoform is hardly detectable; no interaction at all with NRXN3 long isoform. Post-translationally, sialoglycoprotein.

The protein localises to the secreted. It is found in the synapse. Its function is as follows. Acts as a synaptic organizer in specific subsets of neurons in the brain. Essential for the formation and maintenance of inhibitory GABAergic synapses. Promotes the development of dendrite-targeting inhibitory GABAergic synapses made by somatostatin-positive interneurons. May contribute to the function of ventral medial habenula region of the brain implicated in the regulation of anxiety-related behaviors. May play a role in CBLN3 export from the endoplasmic reticulum and secretion. The sequence is that of Cerebellin-4 (CBLN4) from Homo sapiens (Human).